Consider the following 654-residue polypeptide: 4-hydroxy-3-methylbut-2-en-1-yl diphosphate synthase (flavodoxin) (654 aa).

Residues Cys557, Cys560, Cys591, and Glu598 each coordinate [4Fe-4S] cluster.

Belongs to the IspG family. Requires [4Fe-4S] cluster as cofactor.

It catalyses the reaction (2E)-4-hydroxy-3-methylbut-2-enyl diphosphate + oxidized [flavodoxin] + H2O + 2 H(+) = 2-C-methyl-D-erythritol 2,4-cyclic diphosphate + reduced [flavodoxin]. Its pathway is isoprenoid biosynthesis; isopentenyl diphosphate biosynthesis via DXP pathway; isopentenyl diphosphate from 1-deoxy-D-xylulose 5-phosphate: step 5/6. Its function is as follows. Converts 2C-methyl-D-erythritol 2,4-cyclodiphosphate (ME-2,4cPP) into 1-hydroxy-2-methyl-2-(E)-butenyl 4-diphosphate. This is 4-hydroxy-3-methylbut-2-en-1-yl diphosphate synthase (flavodoxin) from Protochlamydia amoebophila (strain UWE25).